The sequence spans 96 residues: Co-chaperonin GroES (96 aa).

It belongs to the GroES chaperonin family. As to quaternary structure, heptamer of 7 subunits arranged in a ring. Interacts with the chaperonin GroEL.

Its subcellular location is the cytoplasm. In terms of biological role, together with the chaperonin GroEL, plays an essential role in assisting protein folding. The GroEL-GroES system forms a nano-cage that allows encapsulation of the non-native substrate proteins and provides a physical environment optimized to promote and accelerate protein folding. GroES binds to the apical surface of the GroEL ring, thereby capping the opening of the GroEL channel. The polypeptide is Co-chaperonin GroES (Paraburkholderia phytofirmans (strain DSM 17436 / LMG 22146 / PsJN) (Burkholderia phytofirmans)).